The chain runs to 286 residues: Citrullinase (286 aa).

A CN hydrolase domain is found at I4–F258. Residue E43 is the Proton acceptor of the active site. Residue K116 is part of the active site. Residue C153 is the Nucleophile of the active site.

This sequence belongs to the carbon-nitrogen hydrolase superfamily.

It carries out the reaction L-citrulline + H2O + 2 H(+) = L-ornithine + NH4(+) + CO2. Functionally, catalyzes the degradation of citrulline into ornithine, carbon dioxide and ammonia. Contributes to intramacrophage survival, in vivo growth and pathogenesis. This is Citrullinase from Francisella tularensis subsp. tularensis (strain SCHU S4 / Schu 4).